Consider the following 353-residue polypeptide: Abasic site processing protein HMCES (353 aa).

Cysteine 2 acts as the Nucleophile in catalysis. Residue cysteine 2 is modified to Thiazolidine linkage to a ring-opened DNA abasic site. The active site involves glutamate 127. Glycyl lysine isopeptide (Lys-Gly) (interchain with G-Cter in SUMO2) cross-links involve residues lysine 148 and lysine 151. Serine 160 is modified (phosphoserine). Glycyl lysine isopeptide (Lys-Gly) (interchain with G-Cter in SUMO2) cross-links involve residues lysine 274 and lysine 275. The segment at 292–353 (TKSPKKEVPD…DEPMAKKPNS (62 aa)) is disordered. The residue at position 294 (serine 294) is a Phosphoserine. Over residues 295–307 (PKKEVPDSPKKDA) the composition is skewed to basic and acidic residues. A Glycyl lysine isopeptide (Lys-Gly) (interchain with G-Cter in SUMO2) cross-link involves residue lysine 305. At serine 321 the chain carries Phosphoserine. A PIP-box motif is present at residues 332–338 (SFLDRWL). A compositionally biased stretch (basic and acidic residues) spans 336 to 353 (RWLKQEKEDEPMAKKPNS). Glycyl lysine isopeptide (Lys-Gly) (interchain with G-Cter in SUMO2) cross-links involve residues lysine 339 and lysine 342.

Belongs to the SOS response-associated peptidase family. In terms of assembly, interacts (via PIP-box motif) with PCNA. In terms of tissue distribution, expressed in embryonic stem cells.

The protein resides in the chromosome. With respect to regulation, formation and reversal of DNA-protein cross-link depends on DNA context. Catalyzes formation of the thiazolidine linkage in presence of abasic sites in single-stranded DNA. Mediates the reversal of the thiazolidine cross-link in presence of double stranded DNA. Its function is as follows. Sensor of abasic sites in single-stranded DNA (ssDNA) required to preserve genome integrity by promoting error-free repair of abasic sites. Acts as an enzyme that recognizes and binds abasic sites in ssDNA at replication forks and chemically modifies the lesion by forming a covalent cross-link with DNA: forms a stable thiazolidine linkage between a ring-opened abasic site and the alpha-amino and sulfhydryl substituents of its N-terminal catalytic cysteine residue. Promotes error-free repair by protecting abasic sites from translesion synthesis (TLS) polymerases and endonucleases that are error-prone and would generate mutations and double-strand breaks. The HMCES DNA-protein cross-link is then either reversed or degraded. HMCES is able to catalyze the reversal of its thiazolidine cross-link and cycle between a cross-link and a non-cross-linked state depending on DNA context: mediates self-reversal of the thiazolidine cross-link in double stranded DNA, allowing APEX1 to initiate downstream repair of abasic sites. The HMCES DNA-protein cross-link can also be degraded by the SPRTN metalloprotease following unfolding by the BRIP1/FANCJ helicase. Has preference for ssDNA, but can also accommodate double-stranded DNA with 3' or 5' overhang (dsDNA), and dsDNA-ssDNA 3' junction. Plays a protective role during somatic hypermutation of immunoglobulin genes in B-cells: acts via its ability to form covalent cross-links with abasic sites, thereby limiting the accumulation of deletions in somatic hypermutation target regions. Also involved in class switch recombination (CSR) in B-cells independently of the formation of a DNA-protein cross-link: acts by binding and protecting ssDNA overhangs to promote DNA double-strand break repair through the microhomology-mediated alternative-end-joining (Alt-EJ) pathway. Acts as a protease: mediates autocatalytic processing of its N-terminal methionine in order to expose the catalytic cysteine. This chain is Abasic site processing protein HMCES, found in Mus musculus (Mouse).